The sequence spans 502 residues: ATP synthase subunit alpha (502 aa).

The interval Val-115–Met-137 is disordered. Gly-169–Thr-176 serves as a coordination point for ATP.

It belongs to the ATPase alpha/beta chains family. F-type ATPases have 2 components, CF(1) - the catalytic core - and CF(0) - the membrane proton channel. CF(1) has five subunits: alpha(3), beta(3), gamma(1), delta(1), epsilon(1). CF(0) has three main subunits: a(1), b(2) and c(9-12). The alpha and beta chains form an alternating ring which encloses part of the gamma chain. CF(1) is attached to CF(0) by a central stalk formed by the gamma and epsilon chains, while a peripheral stalk is formed by the delta and b chains.

It is found in the cell membrane. The catalysed reaction is ATP + H2O + 4 H(+)(in) = ADP + phosphate + 5 H(+)(out). Functionally, produces ATP from ADP in the presence of a proton gradient across the membrane. The alpha chain is a regulatory subunit. This chain is ATP synthase subunit alpha, found in Geobacillus stearothermophilus (Bacillus stearothermophilus).